Reading from the N-terminus, the 240-residue chain is Probable metal transport system ATP-binding protein TM_0124 (240 aa).

The ABC transporter domain maps to 4–223 (VEVKNLTYRI…LKKIFTDFDI (220 aa)). 36-43 (GPNGAGKT) contacts ATP.

The protein belongs to the ABC transporter superfamily.

Its function is as follows. Part of an ATP-driven transport system TM_0123/TM_0124/TM_0125 for a metal. Probably responsible for energy coupling to the transport system. This Thermotoga maritima (strain ATCC 43589 / DSM 3109 / JCM 10099 / NBRC 100826 / MSB8) protein is Probable metal transport system ATP-binding protein TM_0124.